The primary structure comprises 612 residues: Peroxisomal carnitine O-octanoyltransferase (612 aa).

The residue at position 1 (M1) is an N-acetylmethionine. An N6-succinyllysine mark is found at K40 and K57. Catalysis depends on H327, which acts as the Proton acceptor. Residues K406 and 410–417 (KEKQLHPD) contribute to the CoA site. K406 carries the N6-acetyllysine; alternate modification. K406 bears the N6-succinyllysine; alternate mark. (R)-carnitine contacts are provided by Y439, T441, and T452. The Microbody targeting signal signature appears at 610 to 612 (PHL).

This sequence belongs to the carnitine/choline acetyltransferase family. Monomer.

Its subcellular location is the peroxisome. The catalysed reaction is octanoyl-CoA + (R)-carnitine = O-octanoyl-(R)-carnitine + CoA. It catalyses the reaction 4,8-dimethylnonanoyl-CoA + (R)-carnitine = O-4,8-dimethylnonanoyl-(R)-carnitine + CoA. The protein operates within lipid metabolism; fatty acid beta-oxidation. Its function is as follows. Beta-oxidation of fatty acids. The highest activity concerns the C6 to C10 chain length substrate. This is Peroxisomal carnitine O-octanoyltransferase (CROT) from Bos taurus (Bovine).